We begin with the raw amino-acid sequence, 434 residues long: MGLARALRRLSGALEPGNSRAGDEEEAGAGLCRNGWAPGPVAGSRRRGRFVKKDGHCNVRFVNLGGQGARYLSDLFTTCVDVRWRWMCLLFSCSFLASWLLFGLTFWLIASLHGDLAAPPPPAPCFSQVASFLAAFLFALETQTSIGYGVRSVTEECPAAVAAVVLQCIAGCVLDAFVVGAVMAKMAKPKKRNETLVFSENAVVALRDHRLCLMWRVGNLRRSHLVEAHVRAQLLQPRVTPEGEYIPLDHQDVDVGFDGGTDRIFLVSPITIVHEIDSASPLYELGRAELARADFELVVILEGMVEATAMTTQCRSSYLPGELLWGHRFEPVLFQRGSQYEVDYRHFHRTYEVPGTPVCSAKELDERAEQASHSPKSSFPGSLTAFCYENELALSCCQEEDEEEDTKEGTSAETPERAASPQALTPTLALTLPP.

The Cytoplasmic portion of the chain corresponds to 1–81 (MGLARALRRL…LSDLFTTCVD (81 aa)). Cys-79 carries the S-nitrosocysteine modification. A helical transmembrane segment spans residues 82 to 108 (VRWRWMCLLFSCSFLASWLLFGLTFWL). Over 109-131 (IASLHGDLAAPPPPAPCFSQVAS) the chain is Extracellular. The segment at residues 132 to 148 (FLAAFLFALETQTSIGY) is an intramembrane region (helical; Pore-forming). Positions 145-150 (SIGYGV) match the Selectivity filter motif. Residues 149 to 157 (GVRSVTEEC) are Extracellular-facing. The helical transmembrane segment at 158 to 185 (PAAVAAVVLQCIAGCVLDAFVVGAVMAK) threads the bilayer. Residues 186–434 (MAKPKKRNET…TPTLALTLPP (249 aa)) are Cytoplasmic-facing. The disordered stretch occupies residues 398–434 (QEEDEEEDTKEGTSAETPERAASPQALTPTLALTLPP). Residues 407 to 416 (KEGTSAETPE) are compositionally biased toward basic and acidic residues. The segment covering 418 to 434 (AASPQALTPTLALTLPP) has biased composition (low complexity).

It belongs to the inward rectifier-type potassium channel (TC 1.A.2.1) family. KCNJ14 subfamily.

It localises to the membrane. The enzyme catalyses K(+)(in) = K(+)(out). Its activity is regulated as follows. Channel activity is regulated by variations of cytosolic pH; channels are activated by alkaline and inhibited by acidic pH values. Inhibited by Ba(2+) and Cs(+) in a voltage-dependent manner; sensitivity to those inhibitors is lower than in other Kir channels. In terms of biological role, inward rectifier potassium channels are characterized by a greater tendency to allow potassium to flow into the cell rather than out of it. Their voltage dependence is regulated by the concentration of extracellular potassium; as external potassium is raised, the voltage range of the channel opening shifts to more positive voltages. The protein is ATP-sensitive inward rectifier potassium channel 14 (Kcnj14) of Mus musculus (Mouse).